The sequence spans 961 residues: Zinc finger protein basonuclin-1 (961 aa).

Residues 210–219 (MTFMLPFQFF) form a hydrophobic region. 2 consecutive C2H2-type zinc fingers follow at residues 325–348 (VFCTACEKTFYDKGTLKIHYNAVH) and 353–382 (HKCTIEGCNMVFSSLRSRNRHSANPNPRLH). The segment at 370–393 (RNRHSANPNPRLHMPMNRNNRDKD) is disordered. The Nuclear localization signal signature appears at 501–507 (PKKKSRK). A phosphoserine mark is found at S505 and S509. Positions 523 to 572 (EEKRHSLSSDDEVPLQVVSEDEPEDSSPRSDRVPEEQHTQLSLEEPLPQG) are disordered. The segment covering 531–547 (SDDEVPLQVVSEDEPED) has biased composition (acidic residues). Residues 548 to 560 (SSPRSDRVPEEQH) are compositionally biased toward basic and acidic residues. 2 consecutive C2H2-type zinc fingers follow at residues 687–711 (FQCDICKKTFKNACSMKTHEKNTHA) and 715–743 (HACTVEGCGAAFPSRRSRDRHSSNLSLHQ). Residues 810–864 (ESYNSGPPSEGTILDLSTTSSMKSESSSHSSWDSDGVSEEGTALMEDSDGNCEGQ) form a disordered region. A compositionally biased stretch (low complexity) spans 826–844 (STTSSMKSESSSHSSWDSD). 2 C2H2-type zinc fingers span residues 895–918 (ITCHLCQKIYSNKGTFRAHYKTVH) and 923–950 (HKCKVPGCNTMFSSVRSRNRHSQNPNLH). The segment at 937–961 (VRSRNRHSQNPNLHKSLASSPSHLQ) is disordered.

As to quaternary structure, interacts with HSF2BP (via C-terminus). Post-translationally, phosphorylation on Ser-505 and Ser-509 leads to cytoplasmic localization. Epidermis and germ cells of testis and ovary.

The protein resides in the nucleus. It localises to the cytoplasm. Its subcellular location is the nucleoplasm. Functionally, transcriptional activator. It is likely involved in the regulation of keratinocytes terminal differentiation in squamous epithelia and hair follicles. Required for the maintenance of spermatogenesis. It is involved in the positive regulation of oocyte maturation, probably acting through the control of BMP15 levels and regulation of AKT signaling cascade. May also play a role in the early development of embryos. The sequence is that of Zinc finger protein basonuclin-1 (Bnc1) from Mus musculus (Mouse).